The sequence spans 290 residues: Large ribosomal subunit protein uL2m (290 aa).

It belongs to the universal ribosomal protein uL2 family. Probably part of the large ribosomal subunit.

Its subcellular location is the hydrogenosome. The chain is Large ribosomal subunit protein uL2m (rpl2) from Nyctotherus ovalis.